A 418-amino-acid polypeptide reads, in one-letter code: Imidazolonepropionase (418 aa).

Fe(3+) is bound by residues His79 and His81. The Zn(2+) site is built by His79 and His81. The 4-imidazolone-5-propanoate site is built by Arg88, Tyr151, and His184. Tyr151 lines the N-formimidoyl-L-glutamate pocket. Residue His249 participates in Fe(3+) binding. Residue His249 coordinates Zn(2+). Gln252 is a 4-imidazolone-5-propanoate binding site. Asp324 contributes to the Fe(3+) binding site. A Zn(2+)-binding site is contributed by Asp324. Positions 326 and 328 each coordinate N-formimidoyl-L-glutamate. Thr329 lines the 4-imidazolone-5-propanoate pocket.

Belongs to the metallo-dependent hydrolases superfamily. HutI family. Requires Zn(2+) as cofactor. It depends on Fe(3+) as a cofactor.

It is found in the cytoplasm. It carries out the reaction 4-imidazolone-5-propanoate + H2O = N-formimidoyl-L-glutamate. It participates in amino-acid degradation; L-histidine degradation into L-glutamate; N-formimidoyl-L-glutamate from L-histidine: step 3/3. Catalyzes the hydrolytic cleavage of the carbon-nitrogen bond in imidazolone-5-propanoate to yield N-formimidoyl-L-glutamate. It is the third step in the universal histidine degradation pathway. This is Imidazolonepropionase from Colwellia psychrerythraea (strain 34H / ATCC BAA-681) (Vibrio psychroerythus).